We begin with the raw amino-acid sequence, 671 residues long: tRNA 5-methylaminomethyl-2-thiouridine biosynthesis bifunctional protein MnmC (671 aa).

The tRNA (mnm(5)s(2)U34)-methyltransferase stretch occupies residues 1-245 (MVNVMNTLSF…KREMLWGEKP (245 aa)). An FAD-dependent cmnm(5)s(2)U34 oxidoreductase region spans residues 272–671 (VGGGVASLFV…RKLLKGSKVE (400 aa)).

In the N-terminal section; belongs to the methyltransferase superfamily. tRNA (mnm(5)s(2)U34)-methyltransferase family. It in the C-terminal section; belongs to the DAO family. The cofactor is FAD.

The protein localises to the cytoplasm. The catalysed reaction is 5-aminomethyl-2-thiouridine(34) in tRNA + S-adenosyl-L-methionine = 5-methylaminomethyl-2-thiouridine(34) in tRNA + S-adenosyl-L-homocysteine + H(+). In terms of biological role, catalyzes the last two steps in the biosynthesis of 5-methylaminomethyl-2-thiouridine (mnm(5)s(2)U) at the wobble position (U34) in tRNA. Catalyzes the FAD-dependent demodification of cmnm(5)s(2)U34 to nm(5)s(2)U34, followed by the transfer of a methyl group from S-adenosyl-L-methionine to nm(5)s(2)U34, to form mnm(5)s(2)U34. This chain is tRNA 5-methylaminomethyl-2-thiouridine biosynthesis bifunctional protein MnmC, found in Actinobacillus pleuropneumoniae serotype 5b (strain L20).